Consider the following 384-residue polypeptide: Flap endonuclease 1 (384 aa).

Residues 1 to 105 (MGVKGLNQLI…GELEKRLLKR (105 aa)) are N-domain. A Mg(2+)-binding site is contributed by Asp34. Positions 47 and 71 each coordinate DNA. Mg(2+) contacts are provided by Asp87, Glu159, Glu161, Asp180, and Asp182. The I-domain stretch occupies residues 123–254 (DMTKYQKRLV…VTAYKLIKEH (132 aa)). Glu159 contacts DNA. Gly232 and Asp234 together coordinate DNA. Asp234 provides a ligand contact to Mg(2+). Positions 341–349 (IQGRLDGFF) are interaction with PCNA. The disordered stretch occupies residues 354-384 (KYSNTSPLGKDDKKRKTNDKKGAAAKKTKRR). A compositionally biased stretch (basic and acidic residues) spans 362–375 (GKDDKKRKTNDKKG).

Belongs to the XPG/RAD2 endonuclease family. FEN1 subfamily. In terms of assembly, interacts with PCNA. Three molecules of FEN1 bind to one PCNA trimer with each molecule binding to one PCNA monomer. PCNA stimulates the nuclease activity without altering cleavage specificity. Requires Mg(2+) as cofactor. Post-translationally, phosphorylated. Phosphorylation upon DNA damage induces relocalization to the nuclear plasma.

The protein resides in the nucleus. Its subcellular location is the nucleolus. It is found in the nucleoplasm. The protein localises to the mitochondrion. Structure-specific nuclease with 5'-flap endonuclease and 5'-3' exonuclease activities involved in DNA replication and repair. During DNA replication, cleaves the 5'-overhanging flap structure that is generated by displacement synthesis when DNA polymerase encounters the 5'-end of a downstream Okazaki fragment. It enters the flap from the 5'-end and then tracks to cleave the flap base, leaving a nick for ligation. Also involved in the long patch base excision repair (LP-BER) pathway, by cleaving within the apurinic/apyrimidinic (AP) site-terminated flap. Acts as a genome stabilization factor that prevents flaps from equilibrating into structures that lead to duplications and deletions. Also possesses 5'-3' exonuclease activity on nicked or gapped double-stranded DNA, and exhibits RNase H activity. Also involved in replication and repair of rDNA and in repairing mitochondrial DNA. The polypeptide is Flap endonuclease 1 (Lodderomyces elongisporus (strain ATCC 11503 / CBS 2605 / JCM 1781 / NBRC 1676 / NRRL YB-4239) (Yeast)).